A 237-amino-acid chain; its full sequence is Probable septum site-determining protein MinC (237 aa).

It belongs to the MinC family. As to quaternary structure, interacts with MinD and FtsZ.

Its function is as follows. Cell division inhibitor that blocks the formation of polar Z ring septums. Rapidly oscillates between the poles of the cell to destabilize FtsZ filaments that have formed before they mature into polar Z rings. Prevents FtsZ polymerization. The sequence is that of Probable septum site-determining protein MinC from Buchnera aphidicola subsp. Acyrthosiphon pisum (strain 5A).